The sequence spans 507 residues: Arabinose import ATP-binding protein AraG (507 aa).

ABC transporter domains lie at 14–249 and 249–505; these read LRFN…MVGR and RDIQ…LPRT. 46–53 serves as a coordination point for ATP; the sequence is GENGAGKS.

This sequence belongs to the ABC transporter superfamily. Arabinose importer (TC 3.A.1.2.2) family. In terms of assembly, the complex is composed of two ATP-binding proteins (AraG), two transmembrane proteins (AraH) and a solute-binding protein (AraF).

It localises to the cell inner membrane. The enzyme catalyses L-arabinose(out) + ATP + H2O = L-arabinose(in) + ADP + phosphate + H(+). In terms of biological role, part of the ABC transporter complex AraFGH involved in arabinose import. Responsible for energy coupling to the transport system. This chain is Arabinose import ATP-binding protein AraG, found in Pseudomonas savastanoi pv. phaseolicola (strain 1448A / Race 6) (Pseudomonas syringae pv. phaseolicola (strain 1448A / Race 6)).